The sequence spans 872 residues: Alanine--tRNA ligase (872 aa).

Positions 567, 571, 669, and 673 each coordinate Zn(2+).

This sequence belongs to the class-II aminoacyl-tRNA synthetase family. The cofactor is Zn(2+).

Its subcellular location is the cytoplasm. It carries out the reaction tRNA(Ala) + L-alanine + ATP = L-alanyl-tRNA(Ala) + AMP + diphosphate. Its function is as follows. Catalyzes the attachment of alanine to tRNA(Ala) in a two-step reaction: alanine is first activated by ATP to form Ala-AMP and then transferred to the acceptor end of tRNA(Ala). Also edits incorrectly charged Ser-tRNA(Ala) and Gly-tRNA(Ala) via its editing domain. This Streptococcus pyogenes serotype M6 (strain ATCC BAA-946 / MGAS10394) protein is Alanine--tRNA ligase.